The sequence spans 97 residues: MTDLRHYDVIVSPAITEKSTMASENNQVVFNVARKATKPEIKAAVEALFNVKVTGVNTLVRKGKVKRFRGTVGRQSDVKKAIVTLAEGQSIDVATGL.

It belongs to the universal ribosomal protein uL23 family. Part of the 50S ribosomal subunit. Contacts protein L29, and trigger factor when it is bound to the ribosome.

In terms of biological role, one of the early assembly proteins it binds 23S rRNA. One of the proteins that surrounds the polypeptide exit tunnel on the outside of the ribosome. Forms the main docking site for trigger factor binding to the ribosome. The chain is Large ribosomal subunit protein uL23 from Chelativorans sp. (strain BNC1).